Consider the following 141-residue polypeptide: U-scoloptoxin(17)-Er3a (141 aa).

A signal peptide spans 1–21; sequence MKSTFALVFGILMVIAHLSFA.

Belongs to the scoloptoxin-17 family. In terms of processing, contains 3 disulfide bonds. In terms of tissue distribution, expressed by the venom gland.

The protein localises to the secreted. This Ethmostigmus rubripes (Giant centipede) protein is U-scoloptoxin(17)-Er3a.